A 108-amino-acid polypeptide reads, in one-letter code: Nucleoid-associated protein PLES_37951 (108 aa).

Disordered stretches follow at residues 1–25 (MMKG…KMQE) and 87–108 (NQEK…KMPF). Residues 87–98 (NQEKMSGFTSGM) show a composition bias toward polar residues.

The protein belongs to the YbaB/EbfC family. As to quaternary structure, homodimer.

It localises to the cytoplasm. The protein localises to the nucleoid. Binds to DNA and alters its conformation. May be involved in regulation of gene expression, nucleoid organization and DNA protection. This chain is Nucleoid-associated protein PLES_37951, found in Pseudomonas aeruginosa (strain LESB58).